Consider the following 511-residue polypeptide: Ribonuclease E/G-like protein (511 aa).

Residues 35–117 (SDIYLGTVDK…LTANITLSGR (83 aa)) form the S1 motif domain. Positions 296 and 339 each coordinate Mg(2+).

This sequence belongs to the RNase E/G family. The cofactor is Mg(2+).

Its subcellular location is the plastid. It is found in the chloroplast stroma. Functionally, involved in intercistronic processing of primary transcripts from chloroplast operons. The endonucleolytic activity of the enzyme depends on the number of phosphates at the 5' end, is inhibited by structured RNA, and preferentially cleaves A/U-rich sequences. The polypeptide is Ribonuclease E/G-like protein (rne) (Porphyra purpurea (Red seaweed)).